A 114-amino-acid polypeptide reads, in one-letter code: Superoxide dismutase [Cu-Zn] (114 aa).

The Cu cation site is built by H37, H39, and H54. The interval M49 to G73 is disordered. Residues H54, H62, H71, and D74 each coordinate Zn(2+). The segment covering R58 to G73 has biased composition (basic and acidic residues). H111 contacts Cu cation.

The protein belongs to the Cu-Zn superoxide dismutase family. As to quaternary structure, homodimer. Requires Cu cation as cofactor. Zn(2+) serves as cofactor.

The protein resides in the cytoplasm. The enzyme catalyses 2 superoxide + 2 H(+) = H2O2 + O2. In terms of biological role, destroys radicals which are normally produced within the cells and which are toxic to biological systems. This is Superoxide dismutase [Cu-Zn] from Drosophila madeirensis (Fruit fly).